Reading from the N-terminus, the 375-residue chain is uncharacterized protein (375 aa).

Residues 52–301 enclose the GP-PDE domain; sequence VLLSAHRGSW…KQGFATYHES (250 aa).

This is an uncharacterized protein from Sinorhizobium fredii (strain NBRC 101917 / NGR234).